A 99-amino-acid chain; its full sequence is NADH-quinone oxidoreductase subunit K (99 aa).

The next 3 membrane-spanning stretches (helical) occupy residues 3–23 (PANYLILSALLFTIGTVGVLV), 28–48 (IVVFMSVELMLNAVNLTLVTF), and 59–79 (IMAFFVMVVAAAEVVIGLAII).

It belongs to the complex I subunit 4L family. As to quaternary structure, NDH-1 is composed of 14 different subunits. Subunits NuoA, H, J, K, L, M, N constitute the membrane sector of the complex.

Its subcellular location is the cell membrane. It carries out the reaction a quinone + NADH + 5 H(+)(in) = a quinol + NAD(+) + 4 H(+)(out). Its function is as follows. NDH-1 shuttles electrons from NADH, via FMN and iron-sulfur (Fe-S) centers, to quinones in the respiratory chain. The immediate electron acceptor for the enzyme in this species is believed to be a menaquinone. Couples the redox reaction to proton translocation (for every two electrons transferred, four hydrogen ions are translocated across the cytoplasmic membrane), and thus conserves the redox energy in a proton gradient. In Frankia casuarinae (strain DSM 45818 / CECT 9043 / HFP020203 / CcI3), this protein is NADH-quinone oxidoreductase subunit K.